The sequence spans 623 residues: E3 ubiquitin-protein ligase DTX1 (623 aa).

2 WWE domains span residues 13 to 93 (HNFG…PVRR) and 94 to 170 (NFFE…RLRR). A disordered region spans residues 224–319 (KVPSGPPPAL…RASIPPGVPA (96 aa)). Positions 227–242 (SGPPPALPPPPPPPIH) are enriched in pro residues. Over residues 292–311 (GQNNLNRPGEQRTSGSSSRA) the composition is skewed to polar residues. The RING-type zinc-finger motif lies at 413–474 (CTICMERLVT…DGSLQCPTCK (62 aa)).

This sequence belongs to the Deltex family. May form a homo- or heterodimer with other members of the Deltex family. Probably interacts with Notch1. In terms of tissue distribution, specifically expressed in regions undergoing neuronal differentiation. Mainly colocalizes with Notch1.

It carries out the reaction S-ubiquitinyl-[E2 ubiquitin-conjugating enzyme]-L-cysteine + [acceptor protein]-L-lysine = [E2 ubiquitin-conjugating enzyme]-L-cysteine + N(6)-ubiquitinyl-[acceptor protein]-L-lysine.. Its pathway is protein modification; protein ubiquitination. Functionally, regulator of Notch signaling, a signaling pathway involved in cell-cell communications that regulates a broad spectrum of cell-fate determinations. Probably acts both as a positive and negative regulator of Notch, depending on the developmental and cell context. Functions as a ubiquitin ligase protein in vivo, mediating ubiquitination and promoting degradation of MEKK1, suggesting that it may regulate the Notch pathway via some ubiquitin ligase activity. The sequence is that of E3 ubiquitin-protein ligase DTX1 (dtx1) from Xenopus laevis (African clawed frog).